The following is a 901-amino-acid chain: MLIKMLTKVFGSRNDRTLRRMRKVVNIINGMEPAMEKLSDDELKAKTAEFRARLEKGETLESLIPEAFAVVREASKRVFGMRHFDVQLLGGMVLNDRCIAEMRTGEGKTLTATLPAYLNALTGKGVHVVTVNDYLAQRDAENNRPLFEFLGMTVGINMSGLPAPAKREAYAADITYGTNNEYGFDYLRDNMAFSPEERVQRKLHYALVDEVDSILIDEARTPLIISGPAEDSSEMYRKVNKIIPHLIRQEKEDSDTFTGEGHFSVDEKARQVNLTERGLVLIEELLVQEGIMDEGESLYSPTNIMLMHHVTAALRAHALFTRDVDYIVKDGEVIIVDEHTGRTMQGRRWSDGLHQAVEAKEGVEIQNENQTLASITFQNYFRLYEKLAGMTGTADTEAFEFSSIYKLDTVVVPTNRPMIRKDMADLVYMTEAEKIQAIIEDIKTRTAAGQPVLVGTISIEKSEVVSRELTKAGIKHNVLNAKFHASEADIVAQAGYPSAVTIATNMAGRGTDIMLGGSWQAEVAALENPTPEQIEKIKADWQVRHDAVLAAGGLHIIGTERHESRRIDNQLRGRAGRQGDAGSSRFYLSMEDALMRIFASDRVSGMMRKLGMKPGEAIEHPWVTKAIANAQRKVESRNFDIRKQLLEYDDVANDQRRAIYTQRNELLDVSDVSETINSIREDVFKATIDAHIPPQSLEEMWDIEGLQERLKNDFDLDLPIKEWLDKEPELHEETLRERILQSAVETYQRKEEVVGAEMMRHFEKGVMLQTLDSLWKEHLAAMDYLRQGIHLRGYAQKDPKQEYKRESFSMFAAMLESLKYEVISTLSKVQVRMPEEVEAMEQQRREEAERLAQMQQLSHQSDDEAAAQDLAAQTGERKVGRNDPCPCGSGKKYKQCHGRLS.

ATP is bound by residues glutamine 87, 105–109 (GEGKT), and aspartate 512. The tract at residues 852-901 (AQMQQLSHQSDDEAAAQDLAAQTGERKVGRNDPCPCGSGKKYKQCHGRLS) is disordered. Zn(2+)-binding residues include cysteine 885, cysteine 887, cysteine 896, and histidine 897. Residues 891–901 (KKYKQCHGRLS) show a composition bias toward basic residues.

This sequence belongs to the SecA family. Monomer and homodimer. Part of the essential Sec protein translocation apparatus which comprises SecA, SecYEG and auxiliary proteins SecDF-YajC and YidC. Zn(2+) serves as cofactor.

It localises to the cell inner membrane. The protein resides in the cytoplasm. The catalysed reaction is ATP + H2O + cellular proteinSide 1 = ADP + phosphate + cellular proteinSide 2.. In terms of biological role, part of the Sec protein translocase complex. Interacts with the SecYEG preprotein conducting channel. Has a central role in coupling the hydrolysis of ATP to the transfer of proteins into and across the cell membrane, serving both as a receptor for the preprotein-SecB complex and as an ATP-driven molecular motor driving the stepwise translocation of polypeptide chains across the membrane. The polypeptide is Protein translocase subunit SecA (Klebsiella pneumoniae subsp. pneumoniae (strain ATCC 700721 / MGH 78578)).